A 114-amino-acid polypeptide reads, in one-letter code: Probable acid stress chaperone HdeA (114 aa).

Residues 1–26 form the signal peptide; that stretch reads MIKALFNKNTALAAVAILALSGGAMA. Residues Cys46 and Cys94 are joined by a disulfide bond.

This sequence belongs to the HdeA family.

It is found in the periplasm. In terms of biological role, required for optimal acid stress protection. Exhibits a chaperone-like activity only at low pH by suppressing non-specifically the aggregation of denaturated periplasmic proteins. Contributes to acid resistance. Not required for wild-type virulence in the BALB/c mouse model. The chain is Probable acid stress chaperone HdeA from Brucella abortus (strain 2308).